The primary structure comprises 256 residues: MRHPLVMGNWKLNGSIHMVHELIAALRKEISGVAGCDVAIAPPTVYLCQARHEIGGSRIALGAQDTGVNLSGAFTGETSPEMLKNVDVKYVIIGHSERRTYHKESDEFIAQKFGVLKELGLTPVLCIGETEAENEAGKTQEVCARQIDAILNAHGAQAFKDAVIAYEPIWAIGTGKSATPAQAQAVHKFIRDHIAKQDAAIAEQVIIQYGGSVNDKNAAELFSQPDIDGALVGGASLKADAFAVIVKAAAEAKAKK.

9–11 is a binding site for substrate; that stretch reads NWK. The active-site Electrophile is the His-95. The active-site Proton acceptor is the Glu-167. Substrate is bound by residues Gly-173, Ser-212, and 233-234; that span reads GG.

Belongs to the triosephosphate isomerase family. As to quaternary structure, homodimer.

Its subcellular location is the cytoplasm. The catalysed reaction is D-glyceraldehyde 3-phosphate = dihydroxyacetone phosphate. Its pathway is carbohydrate biosynthesis; gluconeogenesis. It participates in carbohydrate degradation; glycolysis; D-glyceraldehyde 3-phosphate from glycerone phosphate: step 1/1. In terms of biological role, involved in the gluconeogenesis. Catalyzes stereospecifically the conversion of dihydroxyacetone phosphate (DHAP) to D-glyceraldehyde-3-phosphate (G3P). This chain is Triosephosphate isomerase, found in Proteus mirabilis (strain HI4320).